A 243-amino-acid chain; its full sequence is Ribonuclease HII (243 aa).

An RNase H type-2 domain is found at 23–217; that stretch reads SVIVGVDEVG…LSSECEGAPP (195 aa). A divalent metal cation contacts are provided by aspartate 29, glutamate 30, and aspartate 122. The interval 223 to 243 is disordered; it reads LSSTGIKTPVDGRGDAVATRD. Residues 232 to 243 show a composition bias toward basic and acidic residues; sequence VDGRGDAVATRD.

Belongs to the RNase HII family. Mn(2+) serves as cofactor. Requires Mg(2+) as cofactor.

Its subcellular location is the cytoplasm. The enzyme catalyses Endonucleolytic cleavage to 5'-phosphomonoester.. In terms of biological role, endonuclease that specifically degrades the RNA of RNA-DNA hybrids. The sequence is that of Ribonuclease HII from Anaplasma marginale (strain St. Maries).